The primary structure comprises 2073 residues: Non-reducing polyketide synthase cla3 (2073 aa).

Positions 9-242 are N-terminal acylcarrier protein transacylase domain (SAT); the sequence is LLFGDYTEPW…EKLNIHALQH (234 aa). Positions 363 to 793 constitute a Ketosynthase family 3 (KS3) domain; sequence SGRIAIVGMS…GGNGCLLLEE (431 aa). Residues cysteine 538, histidine 673, and histidine 712 each act as for beta-ketoacyl synthase activity in the active site. The tract at residues 898-1198 is malonyl-CoA:ACP transacylase (MAT) domain; the sequence is TFTGQGSQYA…KIMSTLDATG (301 aa). The For acyl/malonyl transferase activity role is filled by serine 987. Residues 1276–1590 are product template (PT) domain; that stretch reads STCAQYVITE…QNVILERLLG (315 aa). The interval 1279–1420 is N-terminal hotdog fold; that stretch reads AQYVITETKT…AGLESQWEKS (142 aa). Residues 1279 to 1586 enclose the PKS/mFAS DH domain; that stretch reads AQYVITETKT…FHRVQNVILE (308 aa). The Proton acceptor; for dehydratase activity role is filled by histidine 1311. Positions 1439–1586 are C-terminal hotdog fold; that stretch reads QGHRIQRDIY…FHRVQNVILE (148 aa). Aspartate 1500 functions as the Proton donor; for dehydratase activity in the catalytic mechanism. The tract at residues 1594 to 1637 is disordered; it reads SSSVPAQASDPLRSKRSPQEARSLPGEAKTEKPGSTIATTSPVL. Positions 1641-1718 constitute a Carrier domain; sequence KSEQGMFQAL…NLRCAFDEDV (78 aa). O-(pantetheine 4'-phosphoryl)serine is present on serine 1678. Polar residues predominate over residues 1721-1738; the sequence is EFTDSEVTSGTPNSSESV. The tract at residues 1721-1786 is disordered; the sequence is EFTDSEVTSG…GVLDDGSPQP (66 aa). Residues 1747 to 1774 show a composition bias toward basic and acidic residues; that stretch reads PEEHAFKEPKDDSPLARRDMDNSNDRSL. The tract at residues 1805–1950 is thioesterase (TE) domain; the sequence is FLIADGSGSI…MQQHLRAIFK (146 aa). Histidine 2058 functions as the For thioesterase activity in the catalytic mechanism.

Its pathway is secondary metabolite biosynthesis. Its function is as follows. Highly reducing polyketide synthase; part of the gene cluster that mediates the biosynthesis of cladosporin, a tricyclic octaketide that acts as an antimalarial agent though inhibition of the Plasmodium falciparum lysyl-tRNA synthetase. The highly reducing polyketide synthase cla2 is responsible for biosynthesis up to the pentaketide stage, including of the tetrahydropyran (THP) ring, whereas the three subsequent ketide extensions with no reduction are catalyzed by the non-reducing polyketide synthase cla3. In Cladosporium cladosporioides, this protein is Non-reducing polyketide synthase cla3.